Consider the following 245-residue polypeptide: 1-(5-phosphoribosyl)-5-[(5-phosphoribosylamino)methylideneamino] imidazole-4-carboxamide isomerase (245 aa).

The Proton acceptor role is filled by aspartate 7. Aspartate 129 (proton donor) is an active-site residue.

It belongs to the HisA/HisF family.

The protein resides in the cytoplasm. The catalysed reaction is 1-(5-phospho-beta-D-ribosyl)-5-[(5-phospho-beta-D-ribosylamino)methylideneamino]imidazole-4-carboxamide = 5-[(5-phospho-1-deoxy-D-ribulos-1-ylimino)methylamino]-1-(5-phospho-beta-D-ribosyl)imidazole-4-carboxamide. It participates in amino-acid biosynthesis; L-histidine biosynthesis; L-histidine from 5-phospho-alpha-D-ribose 1-diphosphate: step 4/9. The polypeptide is 1-(5-phosphoribosyl)-5-[(5-phosphoribosylamino)methylideneamino] imidazole-4-carboxamide isomerase (Aliivibrio salmonicida (strain LFI1238) (Vibrio salmonicida (strain LFI1238))).